A 126-amino-acid chain; its full sequence is Holo-[acyl-carrier-protein] synthase (126 aa).

Residues Asp8 and Glu57 each coordinate Mg(2+).

The protein belongs to the P-Pant transferase superfamily. AcpS family. Mg(2+) is required as a cofactor.

The protein resides in the cytoplasm. It catalyses the reaction apo-[ACP] + CoA = holo-[ACP] + adenosine 3',5'-bisphosphate + H(+). Transfers the 4'-phosphopantetheine moiety from coenzyme A to a Ser of acyl-carrier-protein. The polypeptide is Holo-[acyl-carrier-protein] synthase (Geobacter metallireducens (strain ATCC 53774 / DSM 7210 / GS-15)).